Consider the following 209-residue polypeptide: V-type ATP synthase subunit D (209 aa).

Belongs to the V-ATPase D subunit family.

In terms of biological role, produces ATP from ADP in the presence of a proton gradient across the membrane. In Anaeromyxobacter sp. (strain K), this protein is V-type ATP synthase subunit D.